Reading from the N-terminus, the 969-residue chain is Vacuolar membrane protease (969 aa).

Over 1–12 the chain is Cytoplasmic; sequence MTRVNSIIGFRP. Residues 13–33 traverse the membrane as a helical segment; that stretch reads IPVTLLTVITYVSLFSALLFI. At 34–381 the chain is on the vacuolar side; the sequence is DRQPPAVAKK…RAFSVLHLHT (348 aa). Residue Asn125 is glycosylated (N-linked (GlcNAc...) asparagine). 2 residues coordinate Zn(2+): His166 and Asp178. Glu216 serves as the catalytic Proton acceptor. Zn(2+) is bound by residues Glu217, Glu242, and His315. N-linked (GlcNAc...) asparagine glycosylation occurs at Asn355. The helical transmembrane segment at 382-402 threads the bilayer; the sequence is IFAFTITLIVVPFVVVLVAMW. At 403–438 the chain is on the cytoplasmic side; sequence ALGHFDKLYFFSNTAYIPPPPEHSIASRTTQGWRGV. The helical transmembrane segment at 439 to 459 threads the bilayer; sequence LRFPVAFVAASAGVVGMAFLI. The Vacuolar portion of the chain corresponds to 460-469; sequence NKINPMVVYA. A helical membrane pass occupies residues 470 to 490; sequence SQYTVWTCFLSTWWIIAWVIL. Topologically, residues 491–505 are cytoplasmic; sequence RGADAVRPTALARGY. The chain crosses the membrane as a helical span at residues 506–526; sequence GFLEQWLLWLVAMIGVAISIG. Over 527-531 the chain is Vacuolar; the sequence is KSHLG. A helical membrane pass occupies residues 532-552; sequence SGYWVLVFYSGFFTSAFISLL. Topologically, residues 553 to 662 are cytoplasmic; that stretch reads EMAALQKKSE…WSKDLPSWTW (110 aa). The disordered stretch occupies residues 571 to 629; that stretch reads DQAYPPEEHSQTGASGNISNRAANDDDDAGEHATEETPLFRGPNRPLSFAPHRNPRYDN. Polar residues predominate over residues 581 to 592; that stretch reads QTGASGNISNRA. Residues 663–683 form a helical membrane-spanning segment; the sequence is ILQFLATVPLQLVLAGSVALL. The Vacuolar portion of the chain corresponds to 684-698; the sequence is LGNALAQTGADGSDM. A helical membrane pass occupies residues 699-719; sequence LTVLLGFGVFSIILLLPVAPF. Residues 720-727 lie on the Cytoplasmic side of the membrane; that stretch reads LHRITYHV. Residues 728–748 traverse the membrane as a helical segment; it reads TLFIFVIFVGTFIYNLAAPPF. Residues 749–969 are Vacuolar-facing; sequence SPNARLKVYF…LVEGSVPFMI (221 aa). Asn840 carries N-linked (GlcNAc...) asparagine glycosylation.

Belongs to the peptidase M28 family. The cofactor is Zn(2+).

It localises to the vacuole membrane. May be involved in vacuolar sorting and osmoregulation. The protein is Vacuolar membrane protease of Tuber melanosporum (strain Mel28) (Perigord black truffle).